The sequence spans 225 residues: Ribonuclease 3 (225 aa).

Residues 5–127 (IDKLERKIGY…IIGAVYLDSD (123 aa)) form the RNase III domain. Residue Glu40 participates in Mg(2+) binding. Asp44 is an active-site residue. Residues Asp113 and Glu116 each contribute to the Mg(2+) site. Glu116 is an active-site residue. The 71-residue stretch at 154–224 (DPKTRLQEFL…AETALEQLSN (71 aa)) folds into the DRBM domain.

This sequence belongs to the ribonuclease III family. As to quaternary structure, homodimer. Mg(2+) serves as cofactor.

The protein localises to the cytoplasm. It carries out the reaction Endonucleolytic cleavage to 5'-phosphomonoester.. Its function is as follows. Digests double-stranded RNA. Involved in the processing of primary rRNA transcript to yield the immediate precursors to the large and small rRNAs (23S and 16S). Processes some mRNAs, and tRNAs when they are encoded in the rRNA operon. Processes pre-crRNA and tracrRNA of type II CRISPR loci if present in the organism. The sequence is that of Ribonuclease 3 from Vibrio atlanticus (strain LGP32) (Vibrio splendidus (strain Mel32)).